A 158-amino-acid chain; its full sequence is NADH-quinone oxidoreductase subunit B (158 aa).

[4Fe-4S] cluster is bound by residues Cys-37, Cys-38, Cys-102, and Cys-132.

This sequence belongs to the complex I 20 kDa subunit family. In terms of assembly, NDH-1 is composed of 14 different subunits. Subunits NuoB, C, D, E, F, and G constitute the peripheral sector of the complex. Requires [4Fe-4S] cluster as cofactor.

It localises to the cell inner membrane. It carries out the reaction a quinone + NADH + 5 H(+)(in) = a quinol + NAD(+) + 4 H(+)(out). In terms of biological role, NDH-1 shuttles electrons from NADH, via FMN and iron-sulfur (Fe-S) centers, to quinones in the respiratory chain. Couples the redox reaction to proton translocation (for every two electrons transferred, four hydrogen ions are translocated across the cytoplasmic membrane), and thus conserves the redox energy in a proton gradient. The chain is NADH-quinone oxidoreductase subunit B from Dechloromonas aromatica (strain RCB).